The chain runs to 379 residues: Lipoyl synthase 2, mitochondrial (379 aa).

7 residues coordinate [4Fe-4S] cluster: Cys106, Cys111, Cys117, Cys137, Cys141, Cys144, and Ser352. Residues 122–341 (EHGTQTATIM…EERGNELGFL (220 aa)) enclose the Radical SAM core domain.

This sequence belongs to the radical SAM superfamily. Lipoyl synthase family. [4Fe-4S] cluster is required as a cofactor.

It is found in the mitochondrion. It catalyses the reaction [[Fe-S] cluster scaffold protein carrying a second [4Fe-4S](2+) cluster] + N(6)-octanoyl-L-lysyl-[protein] + 2 oxidized [2Fe-2S]-[ferredoxin] + 2 S-adenosyl-L-methionine + 4 H(+) = [[Fe-S] cluster scaffold protein] + N(6)-[(R)-dihydrolipoyl]-L-lysyl-[protein] + 4 Fe(3+) + 2 hydrogen sulfide + 2 5'-deoxyadenosine + 2 L-methionine + 2 reduced [2Fe-2S]-[ferredoxin]. Its pathway is protein modification; protein lipoylation via endogenous pathway; protein N(6)-(lipoyl)lysine from octanoyl-[acyl-carrier-protein]: step 2/2. In terms of biological role, catalyzes the radical-mediated insertion of two sulfur atoms into the C-6 and C-8 positions of the octanoyl moiety bound to the lipoyl domains of lipoate-dependent enzymes, thereby converting the octanoylated domains into lipoylated derivatives. This is Lipoyl synthase 2, mitochondrial from Drosophila yakuba (Fruit fly).